A 274-amino-acid chain; its full sequence is Factor H binding protein (274 aa).

Residues 1 to 19 (MNRTAFCCLSLTTALILTA) form the signal peptide. Residue Cys20 is the site of N-palmitoyl cysteine attachment. Cys20 is lipidated: S-diacylglycerol cysteine. The segment at 27–119 (VAADIGAGLA…LESGEFQVYK (93 aa)) is domain A. The domain B stretch occupies residues 120–183 (QSHSALTAFQ…TAFGSDDAGG (64 aa)). The domain C stretch occupies residues 184–274 (KLTYTIDFAA…IRHIGLAAKQ (91 aa)).

Belongs to the factor H binding-protein family. Binds to host factor H (fH from human). Both fHbp beta-barrels contact Sushi domains 6 and 7 in fH (also called complement control protein domains, CCP). This interaction probably mimics the normal (carbohydrate-dependent) mode of fH recruitement, regulating fH activity. Sucrose octasulphate inhibits the fHbp-fH interaction. In terms of processing, protein is lipidated in N.meningitidis upon growth in radioactive palmitic acid, probably on Cys-20.

The protein resides in the cell outer membrane. Its subcellular location is the secreted. The protein localises to the extracellular vesicle. It is found in the bacterial extracellular vesicle. A bacterial surface lipoprotein that binds host (human) complement factor H (fH, gene CFH), binding contributes to the avoidance of complement-mediated lysis by N.meningitidis. Binding of fH to the bacteria surface is independent of bacterial sialic acid moieties. fH binding affinity is high enough that it may sequester plasma fH, depleting its circulating levels and de-regulating complement in the host. This protein induces high levels of bactericidal antibodies in mice. This chain is Factor H binding protein (fhbP), found in Neisseria meningitidis serogroup B (strain ATCC BAA-335 / MC58).